Reading from the N-terminus, the 208-residue chain is Photosystem I reaction center subunit II-1, chloroplastic (208 aa).

Residues 1-45 constitute a chloroplast transit peptide; sequence MATQAAGIFNSAITTAATSGVKKLHFFSTTHRPKSLSFTKTAIRA. Residue T48 is modified to Phosphothreonine. A disordered region spans residues 49 to 72; it reads DSSAAAAAAPATKEAPVGFTPPQL. Over residues 50-64 the composition is skewed to low complexity; it reads SSAAAAAAPATKEAP. Residues 141 to 149 form a ferredoxin and ferredoxin-oxidoreductase binding region; it reads RLRSKYKIT.

The protein belongs to the PsaD family. In terms of assembly, interacts with PGRL1A and PGRL1B. In terms of processing, phosphorylated by a threonine specific thylakoid kinase in a light activated and redox-dependent manner.

The protein localises to the plastid. Its subcellular location is the chloroplast thylakoid membrane. In terms of biological role, psaD can form complexes with ferredoxin and ferredoxin-oxidoreductase in photosystem I (PS I) reaction center. PSAD may encode the ferredoxin-docking protein. This chain is Photosystem I reaction center subunit II-1, chloroplastic (psaD1), found in Arabidopsis thaliana (Mouse-ear cress).